The sequence spans 103 residues: Putative membrane protein insertion efficiency factor (103 aa).

Belongs to the UPF0161 family.

Its subcellular location is the cell inner membrane. Functionally, could be involved in insertion of integral membrane proteins into the membrane. This Chlamydia felis (strain Fe/C-56) (Chlamydophila felis) protein is Putative membrane protein insertion efficiency factor.